Here is a 397-residue protein sequence, read N- to C-terminus: Chorismate synthase (397 aa).

2 residues coordinate NADP(+): arginine 40 and arginine 46. Residues 129–131, 257–258, glycine 302, 317–321, and arginine 343 each bind FMN; these read RSS, QA, and KPISS.

Belongs to the chorismate synthase family. In terms of assembly, homotetramer. FMNH2 is required as a cofactor.

The catalysed reaction is 5-O-(1-carboxyvinyl)-3-phosphoshikimate = chorismate + phosphate. It participates in metabolic intermediate biosynthesis; chorismate biosynthesis; chorismate from D-erythrose 4-phosphate and phosphoenolpyruvate: step 7/7. Functionally, catalyzes the anti-1,4-elimination of the C-3 phosphate and the C-6 proR hydrogen from 5-enolpyruvylshikimate-3-phosphate (EPSP) to yield chorismate, which is the branch point compound that serves as the starting substrate for the three terminal pathways of aromatic amino acid biosynthesis. This reaction introduces a second double bond into the aromatic ring system. This is Chorismate synthase from Chlorobium luteolum (strain DSM 273 / BCRC 81028 / 2530) (Pelodictyon luteolum).